Consider the following 1562-residue polypeptide: Cell surface antigen I/II (1562 aa).

Positions 1–38 are cleaved as a signal peptide; the sequence is MKVKKTYGFRKSKISKTLCGAVLGTVAAVSVAGQKVFA. Residues 42-54 show a composition bias toward low complexity; the sequence is TTTSDVDTKVVGT. Positions 42-91 are disordered; sequence TTTSDVDTKVVGTQTGNPATNLPEAQGSASKEAEQSQNQAGETNGSIPVE. Residues 60–551 form a helical region; the sequence is ATNLPEAQGS…SKAKYDQKIL (492 aa). Residues 76-87 are compositionally biased toward polar residues; the sequence is QSQNQAGETNGS. 4 Ag I/II A repeats span residues 147–221, 222–303, 304–385, and 386–467; these read KKTT…QKTN, AANQ…QEAN, AANE…KKAN, and AANE…QKDL. 2 disordered regions span residues 824–973 and 1482–1509; these read VPKV…PTDP and SNTV…RTST. Residues 943-958 are compositionally biased toward pro residues; it reads PTPPTPTPDQPEPNKP. Low complexity predominate over residues 1500-1509; the sequence is QDPSSPRTST. The LPXTG sorting signal motif lies at 1529–1533; that stretch reads LPNTG. Pentaglycyl murein peptidoglycan amidated threonine is present on Thr-1532. Residues 1533 to 1562 constitute a propeptide, removed by sortase; it reads GVTNNAYMPLLGIIGLVTSFSLLGLKAKKD.

It belongs to the antigen I/II family. Post-translationally, detected as a 185 kDa cell surface protein, but also as 2 proteins in S.mutans culture supernatants of about 150 kDa (antigen I) and 50 kDa (antigen II); antigen II is only seen after proteolysis. Antigen I and II have the same N-terminus but different C-termini.

The protein localises to the secreted. Its subcellular location is the cell wall. Functionally, surface protein antigen implicated in dental caries. The sequence is that of Cell surface antigen I/II from Streptococcus mutans serotype c (strain ATCC 700610 / UA159).